A 1273-amino-acid polypeptide reads, in one-letter code: ABC transporter B family member 2 (1273 aa).

The signal sequence occupies residues 1–30 (MYISLIFFLSNHFPPLISIPIFIFLSFSSP). The next 7 membrane-spanning stretches (helical) occupy residues 66–86 (FSFA…GACI), 91–111 (VPIF…AYLF), 126–146 (FVYL…CWMH), 209–229 (FIAG…VTLS), 230–250 (IVPL…GLIA), 305–325 (GLGL…LVWF), and 345–365 (LNVV…SAFV). One can recognise an ABC transmembrane type-1 1 domain in the interval 77-366 (MTLGSVGACI…AAPDISAFVR (290 aa)). The ABC transporter 1 domain occupies 401–637 (IQFKDATFSY…PDGAYSSLLR (237 aa)). 436-443 (GGSGSGKS) contacts ATP. N-linked (GlcNAc...) asparagine glycosylation is found at asparagine 466 and asparagine 651. In terms of domain architecture, ABC transmembrane type-1 2 spans 710–997 (GVCGTICAFI…TLALAPDLLK (288 aa)). A run of 2 helical transmembrane segments spans residues 711–731 (VCGT…ALGV) and 752–772 (IAIL…IEHI). Asparagine 806 carries an N-linked (GlcNAc...) asparagine glycan. The next 3 helical transmembrane spans lie at 832 to 852 (ILLQ…ILNW), 934 to 954 (IAGL…GLAL), and 975 to 995 (FMVL…APDL). The region spanning 1030–1266 (IELKGVHFSY…KSGPYFKLIS (237 aa)) is the ABC transporter 2 domain. Residue 1065-1072 (GQSGSGKS) participates in ATP binding. N-linked (GlcNAc...) asparagine glycosylation is found at asparagine 1217 and asparagine 1256.

This sequence belongs to the ABC transporter superfamily. ABCB family. Multidrug resistance exporter (TC 3.A.1.201) subfamily. In terms of assembly, interacts with 1-naphthylphthalamic acid (NPA).

Its subcellular location is the membrane. In Arabidopsis thaliana (Mouse-ear cress), this protein is ABC transporter B family member 2 (ABCB2).